A 317-amino-acid chain; its full sequence is Metaxin-1 (317 aa).

Glycyl lysine isopeptide (Lys-Gly) (interchain with G-Cter in ubiquitin) cross-links involve residues lysine 38, lysine 41, lysine 78, and lysine 168. The chain crosses the membrane as a helical span at residues 272–292; it reads ILSVLAGLAAMVGYALLSGIV.

It belongs to the metaxin family. In terms of assembly, interacts with MTX2/metaxin-2. Associates with the mitochondrial contact site and cristae organizing system (MICOS) complex, composed of at least MICOS10/MIC10, CHCHD3/MIC19, CHCHD6/MIC25, APOOL/MIC27, IMMT/MIC60, APOO/MIC23/MIC26 and QIL1/MIC13. This complex was also known under the names MINOS or MitOS complex. The MICOS complex associates with mitochondrial outer membrane proteins SAMM50, MTX1 and MTX2 (together described as components of the mitochondrial outer membrane sorting assembly machinery (SAM) complex) and DNAJC11, mitochondrial inner membrane protein TMEM11 and with HSPA9. The MICOS and SAM complexes together with DNAJC11 are part of a large protein complex spanning both membranes termed the mitochondrial intermembrane space bridging (MIB) complex. Interacts with ARMC1. In terms of processing, ubiquitinated by PRKN during mitophagy, leading to its degradation and enhancement of mitophagy. Deubiquitinated by USP30. As to expression, ubiquitous. Higher levels are seen in the kidney as compared to other tissues.

The protein resides in the mitochondrion outer membrane. Functionally, involved in transport of proteins into the mitochondrion. Essential for embryonic development. The sequence is that of Metaxin-1 (Mtx1) from Mus musculus (Mouse).